A 1402-amino-acid chain; its full sequence is Roundabout homolog 3 (1402 aa).

Positions 1 to 20 (MLRYLLKTLLQMNLFADSLA) are cleaved as a signal peptide. Topologically, residues 21-891 (RDISNSSELL…ERLAKVLRKP (871 aa)) are extracellular. N-linked (GlcNAc...) asparagine glycans are attached at residues asparagine 25, asparagine 34, and asparagine 53. Ig-like C2-type domains follow at residues 64-160 (PRIV…ASLE), 166-253 (DDFR…AELV), 258-342 (PSFL…GSLS), 347-440 (PQFV…ALLE), and 450-531 (PPII…GEAT). The cysteines at positions 85 and 143 are disulfide-linked. Asparagine 156 carries an N-linked (GlcNAc...) asparagine glycan. 2 cysteine pairs are disulfide-bonded: cysteine 187-cysteine 236 and cysteine 279-cysteine 326. 5 N-linked (GlcNAc...) asparagine glycosylation sites follow: asparagine 355, asparagine 363, asparagine 410, asparagine 459, and asparagine 503. Cysteine 368 and cysteine 424 are joined by a disulfide. Cysteine 472 and cysteine 521 are oxidised to a cystine. Disordered regions lie at residues 540-561 (EDWGASPGPATGPSNPPGPPSQ) and 639-662 (EPSPVSEPVQTQDSSLSRPAEDPW). Over residues 543 to 552 (GASPGPATGP) the composition is skewed to low complexity. Fibronectin type-III domains follow at residues 558–652 (PPSQ…TQDS), 672–766 (AVRM…IPEE), and 771–869 (PPQG…FPPA). The segment covering 646–655 (PVQTQDSSLS) has biased composition (polar residues). Residues asparagine 784, asparagine 813, and asparagine 820 are each glycosylated (N-linked (GlcNAc...) asparagine). The chain crosses the membrane as a helical span at residues 892–912 (AFLAGSSAACGALLLGFCAAL). Residues 913–1402 (YRRQKQRKEL…PGRNRREEPR (490 aa)) lie on the Cytoplasmic side of the membrane. Disordered regions lie at residues 965-989 (SWPHPPRSPSAQEPRGSCCPSNPDP), 1032-1307 (FHGG…VVQA), and 1340-1402 (GRPS…EEPR). Composition is skewed to polar residues over residues 1038–1049 (QHSSGDPSTWSQ) and 1142–1152 (PSPTSSYGQQS). The span at 1158 to 1169 (PSPPDPPQPPTD) shows a compositional bias: pro residues. 2 stretches are compositionally biased toward low complexity: residues 1178-1191 (RRVPLGPSSPLSVS) and 1215-1228 (ASPSPVPSTASSAP). Residues 1243–1254 (HGHRARIRKKPK) show a composition bias toward basic residues. Serine 1263 is subject to Phosphoserine. The segment covering 1294–1304 (LERERSGERRV) has biased composition (basic and acidic residues). The span at 1346 to 1357 (SHGQGTSTCSTA) shows a compositional bias: polar residues. Over residues 1358–1371 (GSNSSRGSNSSRGS) the composition is skewed to low complexity.

Belongs to the immunoglobulin superfamily. ROBO family. As to quaternary structure, interacts (via Fibronectin type-III 1 domain) with NELL2 (via the EGF domains) with a 3:3 stoichiometry; this interaction promotes oligomerization of ROBO3 resulting in the repulsion of commissural axons in the midline. As to expression, detected in embryonal spinal cord and hindbrain.

It localises to the membrane. Functionally, receptor involved in axon guidance during development. Acts as a multifunctional regulator of pathfinding that simultaneously mediates NELL2 repulsion, inhibits SLIT repulsion, and facilitates Netrin-1/NTN1 attraction. In spinal cord development plays a role in guiding commissural axons probably by preventing premature sensitivity to Slit proteins thus inhibiting Slit signaling through ROBO1/ROBO2. Binding OF NELL2 to the receptor ROBO3 promotes oligomerization of ROBO3, resulting in the repulsion of commissural axons in the midline. ROBO3 also indirectly boosts axon attraction to NTN1 without interacting with NTN1 itself. In terms of biological role, mediates NELL2 premature repulsion of commissural axons during midline crossing. Its function is as follows. After midline crossing by the commissural axons, may, in concert with ROBO1 and ROBO2, prevent midline recrossing. Does not mediate NELL2 signaling. In Mus musculus (Mouse), this protein is Roundabout homolog 3.